Consider the following 447-residue polypeptide: Argininosuccinate synthase (447 aa).

Residues 20–28 (AFSGGLDTS) and A46 each bind ATP. Y102 lines the L-citrulline pocket. The ATP site is built by G132 and T134. The L-aspartate site is built by T134, N138, and D139. L-citrulline is bound at residue N138. D139 is an ATP binding site. L-citrulline is bound by residues R142 and S195. D197 contacts ATP. 3 residues coordinate L-citrulline: T204, E206, and E283.

Belongs to the argininosuccinate synthase family. Type 2 subfamily. As to quaternary structure, homotetramer.

Its subcellular location is the cytoplasm. The enzyme catalyses L-citrulline + L-aspartate + ATP = 2-(N(omega)-L-arginino)succinate + AMP + diphosphate + H(+). Its pathway is amino-acid biosynthesis; L-arginine biosynthesis; L-arginine from L-ornithine and carbamoyl phosphate: step 2/3. The sequence is that of Argininosuccinate synthase from Neisseria meningitidis serogroup C (strain 053442).